The primary structure comprises 641 residues: 1-deoxy-D-xylulose-5-phosphate synthase (641 aa).

Thiamine diphosphate-binding positions include histidine 71 and 112-114 (SHA). Position 144 (aspartate 144) interacts with Mg(2+). Thiamine diphosphate is bound by residues 145-146 (GA), asparagine 173, tyrosine 284, and glutamate 365. Position 173 (asparagine 173) interacts with Mg(2+).

The protein belongs to the transketolase family. DXPS subfamily. In terms of assembly, homodimer. It depends on Mg(2+) as a cofactor. The cofactor is thiamine diphosphate.

The catalysed reaction is D-glyceraldehyde 3-phosphate + pyruvate + H(+) = 1-deoxy-D-xylulose 5-phosphate + CO2. It participates in metabolic intermediate biosynthesis; 1-deoxy-D-xylulose 5-phosphate biosynthesis; 1-deoxy-D-xylulose 5-phosphate from D-glyceraldehyde 3-phosphate and pyruvate: step 1/1. Catalyzes the acyloin condensation reaction between C atoms 2 and 3 of pyruvate and glyceraldehyde 3-phosphate to yield 1-deoxy-D-xylulose-5-phosphate (DXP). In Mycolicibacterium paratuberculosis (strain ATCC BAA-968 / K-10) (Mycobacterium paratuberculosis), this protein is 1-deoxy-D-xylulose-5-phosphate synthase.